Consider the following 166-residue polypeptide: UPF0304 protein VP0990 (166 aa).

This sequence belongs to the UPF0304 family.

The chain is UPF0304 protein VP0990 from Vibrio parahaemolyticus serotype O3:K6 (strain RIMD 2210633).